The following is a 478-amino-acid chain: 3-isopropylmalate dehydratase large subunit (478 aa).

Cys-359, Cys-420, and Cys-423 together coordinate [4Fe-4S] cluster.

The protein belongs to the aconitase/IPM isomerase family. LeuC type 1 subfamily. In terms of assembly, heterodimer of LeuC and LeuD. [4Fe-4S] cluster is required as a cofactor.

It catalyses the reaction (2R,3S)-3-isopropylmalate = (2S)-2-isopropylmalate. Its pathway is amino-acid biosynthesis; L-leucine biosynthesis; L-leucine from 3-methyl-2-oxobutanoate: step 2/4. Catalyzes the isomerization between 2-isopropylmalate and 3-isopropylmalate, via the formation of 2-isopropylmaleate. The sequence is that of 3-isopropylmalate dehydratase large subunit from Psychrobacter sp. (strain PRwf-1).